A 399-amino-acid polypeptide reads, in one-letter code: Cytohesin-3 (399 aa).

The stretch at 14 to 61 (EDLSLEEREELLDIRRRKKELIDDIERLKYEIAEVMTEIDNLTSVEES) forms a coiled coil. One can recognise an SEC7 domain in the interval 77–206 (FNMDPKKGIQ…IIMLNTSLHN (130 aa)). The 117-residue stretch at 264-380 (NPDREGWLLK…WMKSIKASIS (117 aa)) folds into the PH domain. Residues 273 to 280 (KLGGRVKT), R284, Y295, R305, and N354 each bind a 1,2-diacyl-sn-glycero-3-phospho-(1D-myo-inositol-3,4,5-trisphosphate). Residues 391-399 (RKRRIANKK) are C-terminal autoinhibitory region.

As to quaternary structure, interacts with TAMALIN. Interacts with FRMD4A. Interacts with FRMD4B.

The protein resides in the cytoplasm. It localises to the cytosol. Its subcellular location is the cell membrane. The protein localises to the cell junction. It is found in the adherens junction. The protein resides in the tight junction. Its function is as follows. Promotes guanine-nucleotide exchange on ARF1. Promotes the activation of ARF factors through replacement of GDP with GTP. Plays a role in the epithelial polarization. In Mus musculus (Mouse), this protein is Cytohesin-3 (Cyth3).